The sequence spans 365 residues: Glycine oxidase (365 aa).

FAD is bound by residues 12-13 (VI), 32-33 (DQ), 40-41 (SS), 45-47 (GGI), and isoleucine 173. Position 302 (arginine 302) interacts with substrate. 327–333 (HYRNGLV) serves as a coordination point for FAD.

Belongs to the DAO family. ThiO subfamily. Monomer. Requires FAD as cofactor.

The enzyme catalyses glycine + O2 + H2O = glyoxylate + H2O2 + NH4(+). It carries out the reaction sarcosine + O2 + H2O = methylamine + glyoxylate + H2O2. It functions in the pathway cofactor biosynthesis; thiamine diphosphate biosynthesis. In terms of biological role, catalyzes the oxidation of glycine, leading to glyoxyl imine and hydrogen peroxide as primary products; glyoxyl imine is used for the biosynthesis of the thiazole ring of thiamine. Otherwise, glyoxyl imine is spontaneously hydrolyzed in water to produce glyoxylate and ammonia. Can also use sarcosine (N-methylglycine) as substrate, and, to a lesser extent, N-ethylglycine and D-proline. Has no activity towards other amino-acids D-Asp, D-Glu, D-Gln, D-His, D-Leu, D-Lys, D-ornithine, D-Trp, D-Val, L-Ala, L-Asp, L-Glu, L-His, L-Leu, L-Lys, L-Met and L-Pro. The sequence is that of Glycine oxidase from Pseudomonas putida (strain ATCC 47054 / DSM 6125 / CFBP 8728 / NCIMB 11950 / KT2440).